A 187-amino-acid polypeptide reads, in one-letter code: UPF0301 protein PMI0339 (187 aa).

Belongs to the UPF0301 (AlgH) family.

This chain is UPF0301 protein PMI0339, found in Proteus mirabilis (strain HI4320).